The primary structure comprises 461 residues: METLFNGTLSVGGRDQESTGFAWWSGNARLINLSGKLLGAHVAHAGLIVFWAGAMNLFEVAHFIPEKPMYEQGLILLPHLASLGYGVGPGGEVVDTFPYFVSGVLHLISSAVLGFGGVYHSLIGPETLEESFPFFGYVWKDKNKMSTILGIHLVILGFGAWLLVWKAMYFGGLFDPWSVGGGDVRVITNPTISPGIIFGYLLKSPFGGDGWIVSVDNMEDVVGGHIWIGTLEILGGIWHILTKPWAWARRAFVWSGEAYLSYSLGAVSLMAFIACCMSWFNNTVYPSEFYGPTGPEASQSQAFTFLVRDQRLGANVASAQGPTGLGKYLMRSPTGEIIFGGETMRFWDFRGPWLEPLRGPNGLDLNKLKNDIQPWQERRAAEYMTHAPLGSLNSVGGVATEINATNFVSPRSWLACSHFVLGFFFFVGHLWHAGRARAAAAGFEKGIDRDNEPVLSMKPLD.

A propeptide spanning residues 1 to 2 (ME) is cleaved from the precursor. Residue Thr-3 is modified to N-acetylthreonine. Thr-3 carries the post-translational modification Phosphothreonine. The next 5 membrane-spanning stretches (helical) occupy residues 57–81 (LFEV…PHLA), 122–143 (LIGP…KDKN), 166–188 (KAMY…RVIT), 243–263 (KPWA…LSYS), and 279–300 (WFNN…ASQS). Residue Glu-355 participates in [CaMn4O5] cluster binding. A helical membrane pass occupies residues 435-459 (RARAAAAGFEKGIDRDNEPVLSMKP).

Belongs to the PsbB/PsbC family. PsbC subfamily. PSII is composed of 1 copy each of membrane proteins PsbA, PsbB, PsbC, PsbD, PsbE, PsbF, PsbH, PsbI, PsbJ, PsbK, PsbL, PsbM, PsbT, PsbX, PsbY, PsbZ, Psb30/Ycf12, at least 3 peripheral proteins of the oxygen-evolving complex and a large number of cofactors. It forms dimeric complexes. Binds multiple chlorophylls and provides some of the ligands for the Ca-4Mn-5O cluster of the oxygen-evolving complex. It may also provide a ligand for a Cl- that is required for oxygen evolution. PSII binds additional chlorophylls, carotenoids and specific lipids. is required as a cofactor.

The protein resides in the plastid. The protein localises to the chloroplast thylakoid membrane. One of the components of the core complex of photosystem II (PSII). It binds chlorophyll and helps catalyze the primary light-induced photochemical processes of PSII. PSII is a light-driven water:plastoquinone oxidoreductase, using light energy to abstract electrons from H(2)O, generating O(2) and a proton gradient subsequently used for ATP formation. This chain is Photosystem II CP43 reaction center protein, found in Tupiella akineta (Green alga).